The primary structure comprises 436 residues: Type II methyltransferase M.BsuRI (436 aa).

The region spanning 59–409 is the SAM-dependent MTase C5-type domain; that stretch reads INVLSLFSGC…SPIANWAINY (351 aa). Residue cysteine 157 is part of the active site.

It belongs to the class I-like SAM-binding methyltransferase superfamily. C5-methyltransferase family. In terms of assembly, monomer.

It catalyses the reaction a 2'-deoxycytidine in DNA + S-adenosyl-L-methionine = a 5-methyl-2'-deoxycytidine in DNA + S-adenosyl-L-homocysteine + H(+). Its function is as follows. A methylase, recognizes the double-stranded sequence 5'-GGCC-3', methylates C-3 on both strands, and protects the DNA from cleavage by the BsuRI endonuclease. This is Type II methyltransferase M.BsuRI (hsdRM) from Bacillus subtilis.